An 807-amino-acid polypeptide reads, in one-letter code: Glycerol-3-phosphate acyltransferase (807 aa).

Residues 308 to 313 (CHRSHM) carry the HXXXXD motif motif.

This sequence belongs to the GPAT/DAPAT family.

It is found in the cell inner membrane. It catalyses the reaction sn-glycerol 3-phosphate + an acyl-CoA = a 1-acyl-sn-glycero-3-phosphate + CoA. It functions in the pathway phospholipid metabolism; CDP-diacylglycerol biosynthesis; CDP-diacylglycerol from sn-glycerol 3-phosphate: step 1/3. This chain is Glycerol-3-phosphate acyltransferase, found in Shewanella putrefaciens (strain CN-32 / ATCC BAA-453).